Reading from the N-terminus, the 48-residue chain is uncharacterized protein (48 aa).

The tract at residues 1–48 (MLFCNNNNNNNNNNNNNNNNNNNNNNNNNNNNNNNNNNNSSNNNNFSR) is disordered.

This is an uncharacterized protein from Dictyostelium discoideum (Social amoeba).